The chain runs to 328 residues: MIEKIWSGESPLWRLLLPLSWLYGLVSGAIRLCYKLKLKRAWRAPVPVVVVGNLTAGGNGKTPVVVWLVEQLQQRGIRVGVVSRGYGGKAESYPLLLSADTTTAQAGDEPVLIYQRTDAPVAVSPVRSDAVKAILAQHPDVQIIVTDDGLQHYRLARDVEIVVIDGVRRFGNGWWLPAGPMRERAGRLKSVDAVIVNGGVPRSGEIPMHLLPGQAVNLRTGTRCDVAQLEHVVAMAGIGHPPRFFATLKMCGVQPEKCVPLADHQSLNHADVSALVSTGQTLVMTEKDAVKCRAFAEENWWYLPVDAQLSGDEPAKLLTQLTSLASGN.

55–62 (TAGGNGKT) contacts ATP.

It belongs to the LpxK family.

The enzyme catalyses a lipid A disaccharide + ATP = a lipid IVA + ADP + H(+). It functions in the pathway glycolipid biosynthesis; lipid IV(A) biosynthesis; lipid IV(A) from (3R)-3-hydroxytetradecanoyl-[acyl-carrier-protein] and UDP-N-acetyl-alpha-D-glucosamine: step 6/6. Its function is as follows. Transfers the gamma-phosphate of ATP to the 4'-position of a tetraacyldisaccharide 1-phosphate intermediate (termed DS-1-P) to form tetraacyldisaccharide 1,4'-bis-phosphate (lipid IVA). The polypeptide is Tetraacyldisaccharide 4'-kinase (Escherichia coli O139:H28 (strain E24377A / ETEC)).